We begin with the raw amino-acid sequence, 518 residues long: Arp2/3 complex-activating protein rickA (518 aa).

Residues 310-518 (SAAQLQSAET…ERNAKQSQQR (209 aa)) are disordered. Pro residues-rich tracts occupy residues 344–354 (TPPPAPPPPMP) and 382–401 (VPPP…PPPV). Residues 418 to 430 (QPRPAVDTTNLMK) are compositionally biased toward polar residues. The WH2 domain maps to 424–441 (DTTNLMKQIQGGFNLKKI). Residues 439–461 (KKIEYGEDGKPIPKNKEDTKETS) show a composition bias toward basic and acidic residues. Residues 488–498 (GTDSGWASDVS) are compositionally biased toward polar residues.

As to quaternary structure, homodimer.

The protein localises to the cell surface. Functionally, recruits and activates the Arp2/3 complex, which in turn leads to actin polymerization, promoting Rickettsia motility during infection. The protein is Arp2/3 complex-activating protein rickA (rickA) of Rickettsia bellii (strain RML369-C).